The chain runs to 1576 residues: eIF-2-alpha kinase GCN2 (1576 aa).

One can recognise an RWD domain in the interval 16–127 (NEIEALKAIF…SIVQDYLNDW (112 aa)). The interval 180–204 (QDELQRRSYETPQSSSKKKTNSKET) is disordered. Protein kinase domains follow at residues 235-511 (VLPL…HVIR) and 556-928 (FEEL…EEFI). Residues 562–570 (LGRGGFGEV) and lysine 585 contribute to the ATP site. The disordered stretch occupies residues 673-714 (YNSSADEEDPEASDISFQYSNTSDKEGSSDKDSSIEEASSVK). Residues 695–706 (SDKEGSSDKDSS) show a composition bias toward basic and acidic residues. The Proton acceptor role is filled by aspartate 772.

This sequence belongs to the protein kinase superfamily. Ser/Thr protein kinase family. GCN2 subfamily. Homodimer; homodimerization is important for kinase activation by uncharged tRNAs. Interacts (via N-terminal RWD domain) with gcn1 (via N- and C-terminus); this interaction stimulates gcn2 kinase activity in a gcn20-dependent manner in response to amino acid starvation. Interacts (via N-terminus) with the gcn1-gcn20 complex on translating ribosomes in amino acid-starved cells; gcn1 may bind near the ribosomal A-site and promotes the transfer of uncharged tRNAs from the A-site to the tRNA-binding domain in gcn2 for its subsequent kinase activation, and hence allowing fil1 translational activation and derepression of amino acid biosynthetic genes. Autophosphorylated.

It is found in the cytoplasm. It catalyses the reaction L-seryl-[protein] + ATP = O-phospho-L-seryl-[protein] + ADP + H(+). It carries out the reaction L-threonyl-[protein] + ATP = O-phospho-L-threonyl-[protein] + ADP + H(+). With respect to regulation, the integrated stress response (ISR) is activated in response to conditions that promote ribosome collisions: gcn1, which acts as a ribosome collision sensor, activates gcn2. The RQC pathway and the integrated stress response (ISR) antagonize each other: hel2 prevents the activation of gcn2, while gcn2 suppresses RQC activation. Ribosome stalling-induced integrated stress response prefers ribosomes with empty A sites. The kinase activity is stimulated upon binding to uncharged tRNAs. Functionally, metabolic-stress sensing protein kinase that phosphorylates the alpha subunit of eukaryotic translation initiation factor 2 (eIF-2-alpha/SUI2) on 'Ser-52' in response to low amino acid, carbon, or purine availability. Required for adapatation to nutrient starvation by acting as a key component of the integrated stress response (ISR), by which cells alter their translational and transcriptional output in response to starvation. Converts phosphorylated eIF-2-alpha/SUI2 either to a competitive inhibitor of translation initiation factor eIF-2B, leading to a global protein synthesis repression, and thus to a reduced overall utilization of amino acids, or to a translational initiation activation of specific mRNAs, such as the transcriptional activator GCN4, and hence allowing GCN4-mediated reprogramming of transcription to alleviate nutrient depletion. Binds uncharged tRNAs. This Schizosaccharomyces pombe (strain 972 / ATCC 24843) (Fission yeast) protein is eIF-2-alpha kinase GCN2.